The following is an 848-amino-acid chain: Probable serine/threonine-protein kinase DDB_G0278535 (848 aa).

Composition is skewed to low complexity over residues methionine 1 to histidine 52, threonine 60 to threonine 85, and threonine 95 to serine 116. The tract at residues methionine 1–valine 117 is disordered. 5 ANK repeats span residues methionine 181–isoleucine 212, serine 218–isoleucine 248, aspartate 252–alanine 285, asparagine 289–valine 320, and arginine 324–isoleucine 353. The 64-residue stretch at lysine 378 to glutamine 441 folds into the SAM domain. Residues asparagine 448–asparagine 478 are disordered. Residues threonine 452–serine 472 are compositionally biased toward low complexity. The 271-residue stretch at leucine 529–methionine 799 folds into the Protein kinase domain. Residues leucine 535–valine 543 and lysine 556 contribute to the ATP site. Aspartate 650 (proton acceptor) is an active-site residue. The interval arginine 810–threonine 848 is disordered. A compositionally biased stretch (low complexity) spans threonine 822–threonine 848.

The protein belongs to the protein kinase superfamily. TKL Ser/Thr protein kinase family.

It carries out the reaction L-seryl-[protein] + ATP = O-phospho-L-seryl-[protein] + ADP + H(+). The catalysed reaction is L-threonyl-[protein] + ATP = O-phospho-L-threonyl-[protein] + ADP + H(+). This is Probable serine/threonine-protein kinase DDB_G0278535 from Dictyostelium discoideum (Social amoeba).